The primary structure comprises 145 residues: 3-hydroxyacyl-[acyl-carrier-protein] dehydratase FabZ (145 aa).

Histidine 49 is an active-site residue.

This sequence belongs to the thioester dehydratase family. FabZ subfamily.

It localises to the cytoplasm. It carries out the reaction a (3R)-hydroxyacyl-[ACP] = a (2E)-enoyl-[ACP] + H2O. In terms of biological role, involved in unsaturated fatty acids biosynthesis. Catalyzes the dehydration of short chain beta-hydroxyacyl-ACPs and long chain saturated and unsaturated beta-hydroxyacyl-ACPs. The sequence is that of 3-hydroxyacyl-[acyl-carrier-protein] dehydratase FabZ from Rickettsia peacockii (strain Rustic).